The following is a 513-amino-acid chain: MSELILIPGETTLAQLEQVWRQGLAVRLADSARPGIAESAARIAAAANGEAPVYGVNTGFGKLASIKIAARDTATLQRNLILSHCCGVGEPVEPETVRLIMVLKLLSLGRGASGVRPEVIQLIEDMLARGVLPVIPSQGSVGASGDLAPLAHMAAAMLGEGRAVHEGREMSSAEALASAGLKPVVLAAKEGLALINGTQVSTAFALAGLFEAFASARAALVTSSLSTDAIMGSTAPFLDEIHTLRGHRGQIVAARTIRALMDGSEIRESHREGDSRVQDPYCIRCQPQVTGACIDLLWQAARTLEIESNAATDNPLVLVGADRIVSGGNFHAEPVAFAADQIALAIAEIGAISQRRIALMVDPALSHDLPPFLTPDPGLNSGLMIAEVTSAALMSENKHLATPCSTDSTPTSANQEDHVSMAAHGARRLKRMNANLAQILGIEALCASAGVEFRAPLATSAPLQAVIAALRQTVPALEQDRYLAPDLAESARLVREGVLVGAIPSHLLDEVRP.

Residues 143–145 (ASG) constitute a cross-link (5-imidazolinone (Ala-Gly)). A 2,3-didehydroalanine (Ser) modification is found at serine 144.

It belongs to the PAL/histidase family. Post-translationally, contains an active site 4-methylidene-imidazol-5-one (MIO), which is formed autocatalytically by cyclization and dehydration of residues Ala-Ser-Gly.

It localises to the cytoplasm. The catalysed reaction is L-histidine = trans-urocanate + NH4(+). The protein operates within amino-acid degradation; L-histidine degradation into L-glutamate; N-formimidoyl-L-glutamate from L-histidine: step 1/3. In Paracoccus denitrificans (strain Pd 1222), this protein is Histidine ammonia-lyase.